The primary structure comprises 142 residues: Hemoglobin subunit alpha-1 (142 aa).

An N-acetylserine modification is found at S1. Residues 1-142 (SLSDKDKAAV…VALALAERYR (142 aa)) form the Globin domain. H59 contributes to the O2 binding site. H88 is a binding site for heme b.

Belongs to the globin family. In terms of assembly, hb1 is a heterotetramer of two alpha-1 chains and two beta chains. HbC is a heterotetramer of two alpha-1 chains and two beta-C chains. In terms of tissue distribution, red blood cells.

Involved in oxygen transport from gills to the various peripheral tissues. This chain is Hemoglobin subunit alpha-1 (hba1), found in Trematomus newnesi (Dusky notothen).